Here is a 238-residue protein sequence, read N- to C-terminus: Endonuclease III homolog (238 aa).

Residues 129-155 enclose the HhH domain; that stretch reads REKGLPREMKDLISLPGIGNKMALLYM. The active-site Nucleophile; for N-glycosylase activity is Lys149. [4Fe-4S] cluster contacts are provided by Cys217, Cys224, Cys227, and Cys233.

It belongs to the Nth/MutY family. [4Fe-4S] cluster is required as a cofactor.

The protein localises to the nucleus. Its subcellular location is the mitochondrion. It catalyses the reaction 2'-deoxyribonucleotide-(2'-deoxyribose 5'-phosphate)-2'-deoxyribonucleotide-DNA = a 3'-end 2'-deoxyribonucleotide-(2,3-dehydro-2,3-deoxyribose 5'-phosphate)-DNA + a 5'-end 5'-phospho-2'-deoxyribonucleoside-DNA + H(+). Its function is as follows. Bifunctional DNA N-glycosylase with associated apurinic/apyrimidinic (AP) lyase function that catalyzes the first step in base excision repair (BER), the primary repair pathway for the repair of oxidative DNA damage. The DNA N-glycosylase activity releases the damaged DNA base from DNA by cleaving the N-glycosidic bond, leaving an AP site. The AP lyase activity cleaves the phosphodiester bond 3' to the AP site by a beta-elimination. Primarily recognizes and repairs oxidative base damage of pyrimidines. This Encephalitozoon cuniculi (strain GB-M1) (Microsporidian parasite) protein is Endonuclease III homolog.